Reading from the N-terminus, the 592-residue chain is Glycosyltransferase 25 family member (592 aa).

The N-terminal stretch at 1 to 13 (MLALLLTTTIVSG) is a signal peptide. N-linked (GlcNAc...) asparagine glycosylation is found at Asn249 and Asn510. Basic and acidic residues-rich tracts occupy residues 552 to 563 (RIQEPKKGDKEQ) and 579 to 592 (GEHD…RSEL). Residues 552–592 (RIQEPKKGDKEQLPNAPALLSESGIGQGEHDLETKNRRSEL) form a disordered region. The Prevents secretion from ER signature appears at 589-592 (RSEL).

It belongs to the glycosyltransferase 25 family.

Its subcellular location is the endoplasmic reticulum lumen. The polypeptide is Glycosyltransferase 25 family member (Anopheles gambiae (African malaria mosquito)).